The chain runs to 1091 residues: Leucine--tRNA ligase, cytoplasmic (1091 aa).

Positions 53–63 match the 'HIGH' region motif; it reads PYMNGYLHIGH. The 'KMSKS' region motif lies at 715–719; sequence KMSKS. Position 718 (K718) interacts with ATP.

This sequence belongs to the class-I aminoacyl-tRNA synthetase family.

It localises to the cytoplasm. The protein resides in the cytosol. It carries out the reaction tRNA(Leu) + L-leucine + ATP = L-leucyl-tRNA(Leu) + AMP + diphosphate. In terms of biological role, catalyzes the specific attachment of an amino acid to its cognate tRNA in a two step reaction: the amino acid (AA) is first activated by ATP to form AA-AMP and then transferred to the acceptor end of the tRNA. The sequence is that of Leucine--tRNA ligase, cytoplasmic from Arabidopsis thaliana (Mouse-ear cress).